A 92-amino-acid chain; its full sequence is Gene 80 protein (92 aa).

The protein is Gene 80 protein (80) of Mycobacterium phage L5 (Mycobacteriophage L5).